Reading from the N-terminus, the 267-residue chain is Probable proteasome subunit beta type-2 (267 aa).

The propeptide at 1–35 (MMGINERKGFDFEYYQRNLLLQEKGFPTPKATSTG) is removed in mature form. Thr-36 acts as the Nucleophile in catalysis.

It belongs to the peptidase T1B family. As to quaternary structure, the 26S proteasome consists of a 20S proteasome core and two 19S regulatory subunits. The 20S proteasome core is composed of 28 subunits that are arranged in four stacked rings, resulting in a barrel-shaped structure. The two end rings are each formed by seven alpha subunits, and the two central rings are each formed by seven beta subunits. The catalytic chamber with the active sites is on the inside of the barrel.

The protein resides in the cytoplasm. Its subcellular location is the nucleus. The enzyme catalyses Cleavage of peptide bonds with very broad specificity.. Functionally, the proteasome is a multicatalytic proteinase complex which is characterized by its ability to cleave peptides with Arg, Phe, Tyr, Leu, and Glu adjacent to the leaving group at neutral or slightly basic pH. The proteasome has an ATP-dependent proteolytic activity (Potential). The sequence is that of Probable proteasome subunit beta type-2 (pup1) from Schizosaccharomyces pombe (strain 972 / ATCC 24843) (Fission yeast).